The chain runs to 347 residues: Druantia protein DruD (347 aa).

The protein localises to the cytoplasm. Functionally, component of antiviral defense system Druantia type I, composed of DruA, DruB, DruC, DruD and DruE. Expression of Druantia in E.coli (strain MG1655) confers resistance to phage lambda, SECphi18, SECphi27 and T4. The protein is Druantia protein DruD of Escherichia coli (strain UMEA 4076-1).